The following is a 113-amino-acid chain: Large ribosomal subunit protein uL22 (113 aa).

This sequence belongs to the universal ribosomal protein uL22 family. In terms of assembly, part of the 50S ribosomal subunit.

Functionally, this protein binds specifically to 23S rRNA; its binding is stimulated by other ribosomal proteins, e.g. L4, L17, and L20. It is important during the early stages of 50S assembly. It makes multiple contacts with different domains of the 23S rRNA in the assembled 50S subunit and ribosome. The globular domain of the protein is located near the polypeptide exit tunnel on the outside of the subunit, while an extended beta-hairpin is found that lines the wall of the exit tunnel in the center of the 70S ribosome. In Halothermothrix orenii (strain H 168 / OCM 544 / DSM 9562), this protein is Large ribosomal subunit protein uL22.